Reading from the N-terminus, the 102-residue chain is Small ribosomal subunit protein uS10 (102 aa).

Belongs to the universal ribosomal protein uS10 family. Part of the 30S ribosomal subunit.

Its function is as follows. Involved in the binding of tRNA to the ribosomes. The protein is Small ribosomal subunit protein uS10 of Oenococcus oeni (strain ATCC BAA-331 / PSU-1).